The primary structure comprises 172 residues: Protein/nucleic acid deglycase 2 (172 aa).

In terms of domain architecture, PfpI endopeptidase spans 3 to 171 (KKIAVLITDE…FNREALRLLG (169 aa)). The active-site Nucleophile is Cys-104.

Belongs to the peptidase C56 family. As to quaternary structure, exists in monomeric, trimeric, and hexameric forms.

Its subcellular location is the cytoplasm. The catalysed reaction is N(omega)-(1-hydroxy-2-oxopropyl)-L-arginyl-[protein] + H2O = lactate + L-arginyl-[protein] + H(+). It catalyses the reaction N(6)-(1-hydroxy-2-oxopropyl)-L-lysyl-[protein] + H2O = lactate + L-lysyl-[protein] + H(+). The enzyme catalyses S-(1-hydroxy-2-oxopropyl)-L-cysteinyl-[protein] + H2O = lactate + L-cysteinyl-[protein] + H(+). It carries out the reaction N(omega)-(1-hydroxy-2-oxoethyl)-L-arginyl-[protein] + H2O = L-arginyl-[protein] + glycolate + H(+). The catalysed reaction is N(6)-(1-hydroxy-2-oxoethyl)-L-lysyl-[protein] + H2O = glycolate + L-lysyl-[protein] + H(+). It catalyses the reaction S-(1-hydroxy-2-oxoethyl)-L-cysteinyl-[protein] + H2O = glycolate + L-cysteinyl-[protein] + H(+). The enzyme catalyses N(2)-(1-hydroxy-2-oxopropyl)-dGTP + H2O = lactate + dGTP + H(+). It carries out the reaction N(2)-(1-hydroxy-2-oxopropyl)-GTP + H2O = lactate + GTP + H(+). The catalysed reaction is N(2)-(1-hydroxy-2-oxopropyl)-GDP + H2O = lactate + GDP + H(+). It catalyses the reaction N(2)-(1-hydroxy-2-oxopropyl)-GMP + H2O = lactate + GMP + H(+). The enzyme catalyses N(2)-(1-hydroxy-2-oxoethyl)-dGTP + H2O = dGTP + glycolate + H(+). It carries out the reaction N(2)-(1-hydroxy-2-oxoethyl)-GTP + H2O = glycolate + GTP + H(+). The catalysed reaction is N(2)-(1-hydroxy-2-oxoethyl)-GDP + H2O = glycolate + GDP + H(+). It catalyses the reaction N(2)-(1-hydroxy-2-oxoethyl)-GMP + H2O = glycolate + GMP + H(+). The enzyme catalyses an N(2)-(1-hydroxy-2-oxopropyl)-guanosine in RNA + H2O = a guanosine in RNA + lactate + H(+). It carries out the reaction an N(2)-(1-hydroxy-2-oxopropyl)-2'-deoxyguanosine in DNA + H2O = a 2'-deoxyguanosine in DNA + lactate + H(+). The catalysed reaction is an N(2)-(1-hydroxy-2-oxoethyl)-guanosine in RNA + H2O = a guanosine in RNA + glycolate + H(+). It catalyses the reaction an N(2)-(1-hydroxy-2-oxoethyl)-2'-deoxyguanosine in DNA + H2O = a 2'-deoxyguanosine in DNA + glycolate + H(+). Its activity is regulated as follows. Glyoxalase activity is inhibited by zinc ions at pH 7.0. Protein and nucleotide deglycase that catalyzes the deglycation of the Maillard adducts formed between amino groups of proteins or nucleotides and reactive carbonyl groups of glyoxals. Thus, functions as a protein deglycase that repairs methylglyoxal- and glyoxal-glycated proteins, and releases repaired proteins and lactate or glycolate, respectively. Deglycates cysteine, arginine and lysine residues in proteins, and thus reactivates these proteins by reversing glycation by glyoxals. Is able to repair glycated serum albumin, collagen, glyceraldehyde-3-phosphate dehydrogenase, and fructose biphosphate aldolase. Acts on early glycation intermediates (hemithioacetals and aminocarbinols), preventing the formation of advanced glycation endproducts (AGE) that cause irreversible damage. Also functions as a nucleotide deglycase able to repair glycated guanine in the free nucleotide pool (GTP, GDP, GMP, dGTP) and in DNA and RNA. Is thus involved in a major nucleotide repair system named guanine glycation repair (GG repair), dedicated to reversing methylglyoxal and glyoxal damage via nucleotide sanitization and direct nucleic acid repair. In vitro, prevents acrylamide formation in asparagine/glyoxal and asparagine/sugar mixtures at 55 degrees Celsius, likely by degrading asparagine/glyoxal Maillard adducts formed at high temperatures. Also displays an apparent glyoxalase activity that in fact reflects its deglycase activity. Is a general stress protein; is required for the protection of bacterial cells against many environmental stresses, including oxidative, thermal, osmotic, UV, and pH stresses. And plays an important role in protection against electrophile/carbonyl stress. The polypeptide is Protein/nucleic acid deglycase 2 (yhbO) (Escherichia coli (strain K12)).